The chain runs to 358 residues: MVDIIFNSSFLGDMGDHSKKKSGIAMCVGCGSQIHDQYILRVAPDLEWHAACLKCAECSQYLDETCTCFVRDGKTYCKRDYVRLFGIKCANCNIGFCSSDLVMRARDNVYHMECFRCSVCSRHLLPGDEFSLRDEELLCRADHGLLMEQASAGSPLSPGIIHSRSLHIADPVSVRQPPHRNHVHKQSEKTTRVRTVLNEKQLHTLRTCYNANPRPDALMKEQLVEMTGLSPRVIRVWFQNKRCKDKKRSIFMKQLQQQHHSDKTNLQGLTGTPLVAGSPIRHDNTVQGNPVEVQTYQPPWKALSEFALQSDLDQPAFQQLVSFSESGSMGNSSGSDVTSLSSQLPDTPNSMVASPVDT.

2 LIM zinc-binding domains span residues 27–80 (CVGC…CKRD) and 89–143 (CANC…RADH). Positions 190–249 (TTRVRTVLNEKQLHTLRTCYNANPRPDALMKEQLVEMTGLSPRVIRVWFQNKRCKDKKRS) form a DNA-binding region, homeobox. Over residues 325–335 (ESGSMGNSSGS) the composition is skewed to low complexity. A disordered region spans residues 325–358 (ESGSMGNSSGSDVTSLSSQLPDTPNSMVASPVDT). Polar residues predominate over residues 336–358 (DVTSLSSQLPDTPNSMVASPVDT).

It localises to the nucleus. In terms of biological role, binds to one of the cis-acting domain of the insulin gene enhancer. May be involved in subtype specialization of primary motoneurons. The protein is Insulin gene enhancer protein ISL-2A (isl2a) of Oncorhynchus tshawytscha (Chinook salmon).